Consider the following 207-residue polypeptide: Urease accessory protein UreG (207 aa).

GTP is bound at residue 14–21 (GPVGSGKT).

The protein belongs to the SIMIBI class G3E GTPase family. UreG subfamily. In terms of assembly, homodimer. UreD, UreF and UreG form a complex that acts as a GTP-hydrolysis-dependent molecular chaperone, activating the urease apoprotein by helping to assemble the nickel containing metallocenter of UreC. The UreE protein probably delivers the nickel.

Its subcellular location is the cytoplasm. In terms of biological role, facilitates the functional incorporation of the urease nickel metallocenter. This process requires GTP hydrolysis, probably effectuated by UreG. The sequence is that of Urease accessory protein UreG from Pseudomonas entomophila (strain L48).